Here is a 245-residue protein sequence, read N- to C-terminus: rRNA adenine N-6-methyltransferase (245 aa).

Residues Asn-10, Leu-12, Gly-37, Glu-58, Asp-83, and Asn-100 each coordinate S-adenosyl-L-methionine.

This sequence belongs to the class I-like SAM-binding methyltransferase superfamily. rRNA adenine N(6)-methyltransferase family.

It carries out the reaction adenosine(2085) in 23S rRNA + 2 S-adenosyl-L-methionine = N(6)-dimethyladenosine(2085) in 23S rRNA + 2 S-adenosyl-L-homocysteine + 2 H(+). This protein produces a dimethylation of the adenine residue at position 2085 in 23S rRNA, resulting in reduced affinity between ribosomes and macrolide-lincosamide-streptogramin B antibiotics. The chain is rRNA adenine N-6-methyltransferase (ermB) from Enterococcus faecalis (strain ATCC 700802 / V583).